Consider the following 365-residue polypeptide: Peptide chain release factor 1 (365 aa).

An N5-methylglutamine modification is found at glutamine 236.

This sequence belongs to the prokaryotic/mitochondrial release factor family. Post-translationally, methylated by PrmC. Methylation increases the termination efficiency of RF1.

The protein localises to the cytoplasm. Peptide chain release factor 1 directs the termination of translation in response to the peptide chain termination codons UAG and UAA. This chain is Peptide chain release factor 1, found in Latilactobacillus sakei subsp. sakei (strain 23K) (Lactobacillus sakei subsp. sakei).